We begin with the raw amino-acid sequence, 496 residues long: Lysine--tRNA ligase (496 aa).

Mg(2+) contacts are provided by E409 and E416.

This sequence belongs to the class-II aminoacyl-tRNA synthetase family. In terms of assembly, homodimer. It depends on Mg(2+) as a cofactor.

It localises to the cytoplasm. The enzyme catalyses tRNA(Lys) + L-lysine + ATP = L-lysyl-tRNA(Lys) + AMP + diphosphate. The polypeptide is Lysine--tRNA ligase (Streptococcus pneumoniae (strain CGSP14)).